The chain runs to 256 residues: Stanniocalcin (256 aa).

Positions 1–18 are cleaved as a signal peptide; that stretch reads MLAKFGLCAVFLVLGTAA. The propeptide occupies 19–33; sequence TFDTDPEEASPRRAR. N62 is a glycosylation site (N-linked (GlcNAc...) asparagine).

It belongs to the stanniocalcin family. In terms of assembly, homodimer; disulfide-linked. Produced and secreted by the corpuscles of Stannius.

It localises to the secreted. Its primary function is the prevention of hypercalcemia. Upon release into the circulation, it lowers calcium transport by the gills, thereby reducing its rate of influx from the environment into the extracellular compartment. STC also stimulates phosphate reabsorption by renal proximal tubules. The consequence of this action is increased levels of plasma phosphate, which combines with excess calcium and promotes its disposal into bone and scales. This is Stanniocalcin (stc) from Oncorhynchus kisutch (Coho salmon).